A 519-amino-acid chain; its full sequence is MSVILLAIPTLFIGFISYYLWIWTYWRRRGIPGPLGYPLVGSFPKTLKSEYPQYLQIRDWTKLYGPIYGYTEGTIKTLIVSDIDIVRQIFVEQYDNFYGRKLNPIQGDPEKDERTNLFSAQGFRWKRLRAISSPTFSNNSLRKINVTVEDSAMELLRHIEEQTSEGQQIDMLQFYQEFTMDTIGRIAMGQTDSQMFKNPLLKFVRAIFGDNRKHIPLIGGVFPTLAQVFRFFMLKFPLLGAANFIHVNKTVVTAVQNRIDQRENDRKNGIEIGEPQDFIDLFLEARADDVEHFQENNGDFSKTSSYGNRQLTTQEIVGQCLVFLIAGFDTTALSLSYTTFLLATHPEVQKKLQEEIERECIEPSISFDHLSKLKYMDCIIKETLRLYPLGTMANSRRCMRATKLGNVEVEVGTMVQVDTWSLHTDTKIWGDDAKEFKPERWLDPNCDQVFQKGGYISFGLGPRQCVGMRLAYMEEKMLLAHILRKYTFEVGTKTEIPLKLVGRATTQPETVWMHLKQRI.

A helical membrane pass occupies residues Val-3–Trp-23. Cys-465 lines the heme pocket.

The protein belongs to the cytochrome P450 family. It depends on heme as a cofactor.

The protein resides in the membrane. Cytochromes P450 are a group of heme-thiolate monooxygenases. They oxidize a variety of structurally unrelated compounds, including steroids, fatty acids, and xenobiotics. In Caenorhabditis elegans, this protein is Putative cytochrome P450 CYP13A10 (cyp-13A10).